The sequence spans 319 residues: Coproporphyrin III ferrochelatase 2 (319 aa).

Fe-coproporphyrin III contacts are provided by residues Tyr-13, Arg-30, 46–47 (RY), Ser-54, and Tyr-125. His-181 and Glu-262 together coordinate Fe(2+).

The protein belongs to the ferrochelatase family.

It is found in the cytoplasm. It carries out the reaction Fe-coproporphyrin III + 2 H(+) = coproporphyrin III + Fe(2+). The protein operates within porphyrin-containing compound metabolism; protoheme biosynthesis. Functionally, involved in coproporphyrin-dependent heme b biosynthesis. Catalyzes the insertion of ferrous iron into coproporphyrin III to form Fe-coproporphyrin III. This Bacillus anthracis protein is Coproporphyrin III ferrochelatase 2.